Consider the following 295-residue polypeptide: 4-hydroxy-tetrahydrodipicolinate synthase (295 aa).

Thr-46 lines the pyruvate pocket. Tyr-134 serves as the catalytic Proton donor/acceptor. The active-site Schiff-base intermediate with substrate is Lys-162. A pyruvate-binding site is contributed by Val-204.

It belongs to the DapA family. As to quaternary structure, homotetramer; dimer of dimers.

Its subcellular location is the cytoplasm. It carries out the reaction L-aspartate 4-semialdehyde + pyruvate = (2S,4S)-4-hydroxy-2,3,4,5-tetrahydrodipicolinate + H2O + H(+). It functions in the pathway amino-acid biosynthesis; L-lysine biosynthesis via DAP pathway; (S)-tetrahydrodipicolinate from L-aspartate: step 3/4. Its function is as follows. Catalyzes the condensation of (S)-aspartate-beta-semialdehyde [(S)-ASA] and pyruvate to 4-hydroxy-tetrahydrodipicolinate (HTPA). This is 4-hydroxy-tetrahydrodipicolinate synthase from Oceanobacillus iheyensis (strain DSM 14371 / CIP 107618 / JCM 11309 / KCTC 3954 / HTE831).